Here is a 1877-residue protein sequence, read N- to C-terminus: MGKRAGGAAAAAAAASTSSAAGLEPAAGRGGGPRSAAAGLLGALHLVMTLVVAAARAEKEAFIQSESIIEVLRFDDGGLLQTETTLGLGSYQQKSISLYRGNCRPIRFEPPMLDFHEQPVGMPKMEKVYLHNPSSEETITLVSISATTSHFHASFFQNRKILPGGNTSFDVVFLARVVGNVENTLFINTSNHGVFTYQVFGVGVPNPYRLRPFLGARVPVNSSFSPIINIHNPHSEPLQVVEMYSSGGDLHLELPTGQQGGTRKLWEIPPYETKGVMRASFSSREADNHTAFIRIKTNASDSTEFIILPVEVEVTTAPGIYSSTEMLDFGTLRTQDLPKVLNLHLLNSGTKDVPITSVRPTPQNDAITVHFKPVTLKASESKYTKVASISFDASRAKKPSQFSGKITVKAKEKSYSKLEIPYQAEVLDGYLGFDHAATLFHIQDSPADPVERPIYLTNTFSFAILIHDVLLPEEARIMFQVHNFSQPVLILPNESGYIFTLFFMPSTSSMHIDNNILLVTNASKFHLPVRVYTGFLDYFVLPPKIEERFIDFGVLSATEASSILFAIINSNPIELAIKSWHIIGDGLSIELVATERGNRSTVIASLPELERSSLPDQSPVTLASGHFAVFRVKLTAKKLEGVHDGAIQITTDYEILTIPVKAVIAVGSLTCFPKHMVLPPSFPGKIVHQSLNIMNSFSQKVKIQQIRSLSEDVRFYYKRLRGNREDLEPGKKSKIANIYFDPGLQCGDHCYIGLPFLSKSEPKVQPGVAMQEDLWDADWDAHQSLFKAWMGIKENAGHRLNAMFEVNTDLQKNIVSKVSAELSWPSVLSSPRLLKFPLTNTNCSSEEEISLENPADVPVYVQFIPLALYSNPSVFADKLVSRFNLSKVAKLDLRTLEFQVYRNSAHPLQSPTGFTEGLSRHFILNLILKPGEKKSVKVKFTPLHNRTVSSLIIVRNNLTVMDAVMVQGQGTTENLRVAGKLPGPGSSLRFKITEALLKDCIDRLKLREPNFTLKRTFKVENTGQLEIRVETIEISGYACEGYGFKVVNCQEFALSANASRDIVILFTPDFTASRVIRELKFVTSSGSEFVFVLNASLPYHMLAACAEALPRPNWELALYIIISGVMSALFLLVIGTAYLEAQGIWEPFRRRLSFEASNPPFDVGRPFDLRRIVGISSEGNLNTLGCEHSHGRGFYSNASSRPGTGSHRQCGTSVHPHSSHGSKNSADVDNVRTRNSSSMSSRTSPQAAASQSTSKTSPLVSETAAATQGHTASRKSRGAKQGQHSSQHHSHSHSPLEQHSQPPPPVPQHQEPPPERLSPAPLTHPSHPERASTTRHSSEDSDITSLIEAMDKDFDHHDSSPLDVFTEQPPSPMSKSKGKGKSLQQRKAKPPKKQEEKEKRGKGKPQEDELKDALADDDSSSTTTETSNPDTEPLLREDTEKHKGRPAVPEKQESELSQGKPKSKKLLNAKKEIPTDVKGSSFELPYTPSLENKQRRNLPTKIPLPTTLASGSKSRNPPKTKGTNKLVENRPVALSKFLPSSQELGNTSSSEGEKDSPPPEWDAVPVHKPSSSTDSLYKLSLQTLNADIFLKQRQTSPTPASPSLPTAPCPFTSRGSYSSVVNSSGSDTKAKQTSSSKSKLTKAASLPGKNGNPTFAAVAAGYDKSPGGNGFAKISSNKSDFSSSLGISHIPVDSDGSDSSGLWSPVSNPNSPDFTPLNSFSAFGNSFNLTGAVFSKLSRSCSQSSQRSWNEFNSGPSYLWDSPATDPSPSWPASSSSPTHTATSILGNSSGLWSTTPFSSSIWSSNINSNLPFSTPTNALSSISLMGTENSAAAHTPSASGPADDLGQTYNPWRIWSPTVGRRSSDPWSNSHFPHEN.

The N-terminal stretch at 1–20 is a signal peptide; that stretch reads MGKRAGGAAAAAAAASTSSA. At 21-1115 the chain is on the lumenal side; the sequence is AGLEPAAGRG…AEALPRPNWE (1095 aa). The tract at residues 107–281 is papD-L domain; sequence RFEPPMLDFH…ETKGVMRASF (175 aa). Residues 1116-1136 form a helical membrane-spanning segment; the sequence is LALYIIISGVMSALFLLVIGT. Topologically, residues 1137 to 1877 are cytoplasmic; it reads AYLEAQGIWE…WSNSHFPHEN (741 aa). Positions 1197-1227 are enriched in polar residues; the sequence is NASSRPGTGSHRQCGTSVHPHSSHGSKNSAD. 4 disordered regions span residues 1197–1573, 1590–1655, 1679–1707, and 1830–1852; these read NASS…SSST, LKQR…NPTF, SDFS…SPVS, and NSAA…TYNP. The segment covering 1233–1258 has biased composition (low complexity); the sequence is TRNSSSMSSRTSPQAAASQSTSKTSP. Residues 1301–1311 are compositionally biased toward pro residues; it reads QPPPPVPQHQE. 2 positions are modified to phosphoserine: serine 1318 and serine 1338. Composition is skewed to basic and acidic residues over residues 1326-1339 and 1349-1360; these read SHPE…HSSE and AMDKDFDHHDSS. Serine 1371 carries the phosphoserine modification. A compositionally biased stretch (basic residues) spans 1376 to 1391; that stretch reads SKGKGKSLQQRKAKPP. The segment covering 1392–1414 has biased composition (basic and acidic residues); the sequence is KKQEEKEKRGKGKPQEDELKDAL. Low complexity predominate over residues 1420–1432; that stretch reads SSTTTETSNPDTE. 2 stretches are compositionally biased toward polar residues: residues 1507–1523 and 1538–1550; these read TLAS…TKGT and LPSS…TSSS. Over residues 1599–1608 the composition is skewed to pro residues; that stretch reads PASPSLPTAP. A compositionally biased stretch (low complexity) spans 1609–1646; the sequence is CPFTSRGSYSSVVNSSGSDTKAKQTSSSKSKLTKAASL. The span at 1830–1839 shows a compositional bias: polar residues; it reads NSAAAHTPSA. Residues serine 1857 and serine 1865 each carry the phosphoserine modification.

The protein belongs to the TMEM131 family. Interacts (via PapD-L domain) with COL1A2 (via C-terminus); the interaction is direct, may occur with other collagen proteins, and is involved in assembly and TRAPPIII ER-to-Golgi transport complex-dependent secretion of collagen. Interacts (via C-terminus) with TRAPPC8 (via C-terminus); the interaction is direct.

It is found in the membrane. Its function is as follows. Collagen binding transmembrane protein involved in collagen secretion by recruiting the ER-to-Golgi transport complex TRAPPIII. May play a role in the immune response to viral infection. The polypeptide is Transmembrane protein 131 (Mus musculus (Mouse)).